An 876-amino-acid polypeptide reads, in one-letter code: DNA topoisomerase 1 (876 aa).

The region spanning 3 to 150 (KSLVIVESPA…RYKRVVFNEI (148 aa)) is the Toprim domain. Residue E9 coordinates Mg(2+). Residues 37–69 (LPTAGQTATPTGKAAAASTKKASTTDKEQQKRE) are disordered. Positions 38-58 (PTAGQTATPTGKAAAASTKKA) are enriched in low complexity. A compositionally biased stretch (basic and acidic residues) spans 59–69 (STTDKEQQKRE). D119 is a Mg(2+) binding site. Residues 166-582 (NMDGVNAQQA…EFFADFSRDL (417 aa)) form the Topo IA-type catalytic domain. The segment at 200–205 (SAGRVQ) is interaction with DNA. Y327 acts as the O-(5'-phospho-DNA)-tyrosine intermediate in catalysis. 2 C4-type zinc fingers span residues 668-695 (CPICETAMDAYLIDDKRKLHVCGNNPNC) and 717-742 (CDKCGSDMVLKNGRFGKYMGCTNDAC).

The protein belongs to the type IA topoisomerase family. Monomer. Requires Mg(2+) as cofactor.

The enzyme catalyses ATP-independent breakage of single-stranded DNA, followed by passage and rejoining.. Releases the supercoiling and torsional tension of DNA, which is introduced during the DNA replication and transcription, by transiently cleaving and rejoining one strand of the DNA duplex. Introduces a single-strand break via transesterification at a target site in duplex DNA. The scissile phosphodiester is attacked by the catalytic tyrosine of the enzyme, resulting in the formation of a DNA-(5'-phosphotyrosyl)-enzyme intermediate and the expulsion of a 3'-OH DNA strand. The free DNA strand then undergoes passage around the unbroken strand, thus removing DNA supercoils. Finally, in the religation step, the DNA 3'-OH attacks the covalent intermediate to expel the active-site tyrosine and restore the DNA phosphodiester backbone. This chain is DNA topoisomerase 1, found in Vibrio cholerae serotype O1 (strain ATCC 39315 / El Tor Inaba N16961).